Reading from the N-terminus, the 488-residue chain is (S)-canadine synthase CYP719A21 (488 aa).

Residues Leu-6–Phe-26 form a helical membrane-spanning segment. Cys-432 contributes to the heme binding site.

This sequence belongs to the cytochrome P450 family. Requires heme as cofactor.

Its subcellular location is the membrane. The enzyme catalyses (S)-tetrahydrocolumbamine + reduced [NADPH--hemoprotein reductase] + O2 = (S)-canadine + oxidized [NADPH--hemoprotein reductase] + 2 H2O + H(+). It participates in alkaloid biosynthesis. Its function is as follows. Cytochrome P450 involved in the biosynthesis of the benzylisoquinoline alkaloid noscapine. Converts (S)-tetrahydrocolumbamine to (S)-canadine. This Papaver somniferum (Opium poppy) protein is (S)-canadine synthase CYP719A21.